Here is a 170-residue protein sequence, read N- to C-terminus: Photosystem I assembly protein Ycf3 (170 aa).

TPR repeat units follow at residues 35-68, 72-105, and 120-153; these read AFTYYRDGMLAQSEGNYAEALQNYYEATRLEIDP, SYILYNIGLIHTSNGEHTKALEYYFRALERNPFL, and GEQAILQGDSEIAEAWFDQAAEYWKQAIALTPGN.

Belongs to the Ycf3 family.

It localises to the plastid. The protein resides in the chloroplast thylakoid membrane. Its function is as follows. Essential for the assembly of the photosystem I (PSI) complex. May act as a chaperone-like factor to guide the assembly of the PSI subunits. The sequence is that of Photosystem I assembly protein Ycf3 from Oryza nivara (Indian wild rice).